A 981-amino-acid polypeptide reads, in one-letter code: Mediator of RNA polymerase II transcription subunit 5 (981 aa).

This sequence belongs to the Mediator complex subunit 5 family. Component of the Mediator complex.

The protein resides in the nucleus. Component of the Mediator complex, a coactivator involved in the regulated transcription of nearly all RNA polymerase II-dependent genes. Mediator functions as a bridge to convey information from gene-specific regulatory proteins to the basal RNA polymerase II transcription machinery. Mediator is recruited to promoters by direct interactions with regulatory proteins and serves as a scaffold for the assembly of a functional preinitiation complex with RNA polymerase II and the general transcription factors. In Scheffersomyces stipitis (strain ATCC 58785 / CBS 6054 / NBRC 10063 / NRRL Y-11545) (Yeast), this protein is Mediator of RNA polymerase II transcription subunit 5 (NUT1).